A 512-amino-acid chain; its full sequence is 2-isopropylmalate synthase (512 aa).

The Pyruvate carboxyltransferase domain maps to 5–268 (LIIFDTTLRD…DVGIDTQHIV (264 aa)). Positions 14, 202, 204, and 239 each coordinate Mn(2+). Positions 394–512 (GFVSLAQHSE…SKAERVAAQG (119 aa)) are regulatory domain.

The protein belongs to the alpha-IPM synthase/homocitrate synthase family. LeuA type 1 subfamily. As to quaternary structure, homodimer. The cofactor is Mn(2+).

The protein localises to the cytoplasm. It catalyses the reaction 3-methyl-2-oxobutanoate + acetyl-CoA + H2O = (2S)-2-isopropylmalate + CoA + H(+). It participates in amino-acid biosynthesis; L-leucine biosynthesis; L-leucine from 3-methyl-2-oxobutanoate: step 1/4. Catalyzes the condensation of the acetyl group of acetyl-CoA with 3-methyl-2-oxobutanoate (2-ketoisovalerate) to form 3-carboxy-3-hydroxy-4-methylpentanoate (2-isopropylmalate). The chain is 2-isopropylmalate synthase from Acidovorax ebreus (strain TPSY) (Diaphorobacter sp. (strain TPSY)).